The chain runs to 306 residues: D-alanine--D-alanine ligase (306 aa).

Positions 106-301 constitute an ATP-grasp domain; that stretch reads KLLWQSAGIN…FEELVLKILG (196 aa). 132 to 187 serves as a coordination point for ATP; the sequence is AKELGLPLIVKPSREGSTIGLSKVREAGEVAAAWHLAARHDAMVLAEQFIEGTELT. Positions 255, 268, and 270 each coordinate Mg(2+).

It belongs to the D-alanine--D-alanine ligase family. Requires Mg(2+) as cofactor. Mn(2+) is required as a cofactor.

It localises to the cytoplasm. The enzyme catalyses 2 D-alanine + ATP = D-alanyl-D-alanine + ADP + phosphate + H(+). It participates in cell wall biogenesis; peptidoglycan biosynthesis. Its function is as follows. Cell wall formation. The polypeptide is D-alanine--D-alanine ligase (Nitrosospira multiformis (strain ATCC 25196 / NCIMB 11849 / C 71)).